The primary structure comprises 2329 residues: Genome polyprotein (2329 aa).

One can recognise a Peptidase C28 domain in the interval 29–182; it reads MEFTLHNGEK…DPSDVLVFVP (154 aa). Residues cysteine 51, histidine 148, and aspartate 163 each act as for leader protease activity in the active site. 2 disordered regions span residues 197–218 and 238–264; these read QKRL…QSGN and QLGD…NNTQ. The N-myristoyl glycine; by host moiety is linked to residue glycine 202. Polar residues-rich tracts occupy residues 204–218 and 238–251; these read GQSS…QSGN and QLGD…SNEG. Positions 252-264 are enriched in low complexity; that stretch reads STDTTSTHTNNTQ. Positions 787-795 are antigenic epitope; the sequence is ALLRSATYY. Residues 866–868 carry the Cell attachment site motif; sequence RGD. The SF3 helicase domain occupies 1186–1350; the sequence is NVHIANLCKV…DGYKINNKLD (165 aa). ATP is bound at residue 1214–1221; it reads GKSGQGKS. Residues 1478-1498 lie within the membrane without spanning it; the sequence is KENFEIVALCLTLLANIVIMI. Composition is skewed to basic and acidic residues over residues 1526 to 1535 and 1546 to 1558; these read KTLDEAEKNP and FRER…KTSD. The disordered stretch occupies residues 1526-1577; sequence KTLDEAEKNPLETSGASTVGFRERTLPGRKTSDDVNSEPVKSVEEQPQAEGP. Residues tyrosine 1578, tyrosine 1601, and tyrosine 1625 each carry the O-(5'-phospho-RNA)-tyrosine modification. The Peptidase C3 domain maps to 1649–1845; it reads APPTDLQKMV…YCSCVSRSML (197 aa). Histidine 1692 serves as the catalytic For protease 3C activity; Proton donor/acceptor. Active-site for protease 3C activity residues include aspartate 1730 and cysteine 1809. 2 consecutive short sequence motifs (nuclear localization signal) follow at residues 1875 to 1883 and 1876 to 1883; these read MRKTKLAPT and RKTKLAPT. Positions 2093 to 2211 constitute a RdRp catalytic domain; sequence RNVWDVDYSA…ASDYDLDFEA (119 aa). The active-site For RdRp activity is aspartate 2197.

This sequence belongs to the picornaviruses polyprotein family. As to quaternary structure, interacts with host ISG15. Interacts (via R-G-D motif) with host ITGAV/ITGB6. Interacts with host MAVS; this interaction inhibits binding of host TRAF3 to MAVS, thereby suppressing interferon-mediated responses. In terms of assembly, forms homooligomers. As to quaternary structure, homohexamer. Interacts with host VIM. Interacts with host BECN1. Interacts with host DCTN3. In terms of assembly, interacts with RNA-dependent RNA polymerase; this interaction allows 3B-1 to binds 2 polymerases and act as a primer. It also allows the recruitment of the RNA-dependent RNA polymerase to host membranes. As to quaternary structure, interacts with RNA-dependent RNA polymerase; this interaction allows 3B-2 to act as a primer. Interacts with RNA-dependent RNA polymerase; this interaction allows 3B-3 to act as a primer. In terms of assembly, interacts with 3B-1; this interaction allows 3B-1 to binds 2 polymerases and act as a primer. It also allows the recruitment of the RNA-dependent RNA polymerase to host membranes. Interacts with 3B-2; this interaction allows 3B-2 to act as a primer. Interacts with 3B-3; this interaction allows 3B-3 to act as a primer. Post-translationally, specific enzymatic cleavages in vivo by the viral proteases yield a variety of precursors and mature proteins. The polyprotein seems to be cotranslationally cleaved at the 2A/2B junction by a ribosomal skip from one codon to the next without formation of a peptide bond. This process would release the L-P1-2A peptide from the translational complex. In terms of processing, during virion maturation, immature virions are rendered infectious following cleavage of VP0 into VP4 and VP2. This maturation seems to be an autocatalytic event triggered by the presence of RNA in the capsid and is followed by a conformational change of the particle. Myristoylation is required during RNA encapsidation and formation of the mature virus particle. Post-translationally, uridylylated by the polymerase and covalently linked to the 5'-end of genomic RNA. These uridylylated forms act as a nucleotide-peptide primer for the polymerase.

It is found in the host nucleus. The protein localises to the host cytoplasm. The protein resides in the virion. Its subcellular location is the host endoplasmic reticulum membrane. It localises to the host cytoplasmic vesicle membrane. It carries out the reaction Autocatalytically cleaves itself from the polyprotein of the foot-and-mouth disease virus by hydrolysis of a Lys-|-Gly bond, but then cleaves host cell initiation factor eIF-4G at bonds -Gly-|-Arg- and -Lys-|-Arg-.. The enzyme catalyses a ribonucleoside 5'-triphosphate + H2O = a ribonucleoside 5'-diphosphate + phosphate + H(+). It catalyses the reaction RNA(n) + a ribonucleoside 5'-triphosphate = RNA(n+1) + diphosphate. The catalysed reaction is Selective cleavage of Gln-|-Gly bond in the poliovirus polyprotein. In other picornavirus reactions Glu may be substituted for Gln, and Ser or Thr for Gly.. Functionally, autocatalytically cleaves itself from the polyprotein at the L/VP0 junction. Also cleaves the host translation initiation factors EIF4G1 and EIF4G3, in order to shut off the capped cellular mRNA transcription. Plays a role in counteracting host innate antiviral response using diverse mechanisms. Possesses a deubiquitinase activity acting on both 'Lys-48' and 'Lys-63'-linked polyubiquitin chains. In turn, inhibits the ubiquitination and subsequent activation of key signaling molecules of type I IFN response such as host RIGI, TBK1, TRAF3 and TRAF6. Inhibits host NF-kappa-B activity by inducing a decrease in RELA mRNA levels. Cleaves a peptide bond in the C-terminus of host ISG15, resulting in the damaging of this modifier that can no longer be attached to target proteins. Also cleaves host G3BP1 and G3BP2 in order to inhibit cytoplasmic stress granules assembly. Lies on the inner surface of the capsid shell. After binding to the host receptor, the capsid undergoes conformational changes. Capsid protein VP4 is released, capsid protein VP1 N-terminus is externalized, and together, they shape a pore in the host membrane through which the viral genome is translocated into the host cell cytoplasm. After genome has been released, the channel shrinks. Its function is as follows. Forms an icosahedral capsid of pseudo T=3 symmetry with capsid proteins VP1 and VP3. The capsid is composed of 60 copies of each capsid protein organized in the form of twelve pentamers and encloses the viral positive strand RNA genome. Upon acidifcation in the endosome, dissociates into pentamers. In terms of biological role, forms an icosahedral capsid of pseudo T=3 symmetry with capsid proteins VP0 and VP3. The capsid is composed of 60 copies of each capsid protein organized in the form of twelve pentamers and encloses the viral positive strand RNA genome. Upon acidifcation in the endosome, dissociates into pentamers. Functionally, forms an icosahedral capsid of pseudo T=3 symmetry with capsid proteins VP2 and VP3. The capsid is composed of 60 copies of each capsid protein organized in the form of twelve pentamers and encloses the viral positive strand RNA genome. Mediates cell entry by attachment to an integrin receptor, usually host ITGAV/ITGB6. In addition, targets host MAVS to suppress type I IFN pathway. Upon acidifcation in the endosome, dissociates into pentamers. Mediates self-processing of the polyprotein by a translational effect termed 'ribosome skipping'. Mechanistically, 2A-mediated cleavage occurs between the C-terminal glycine and the proline of the downstream protein 2B. In the case of foot-and-mouth disease virus, the 2A oligopeptide is post-translationally 'trimmed' from the C-terminus of the upstream protein 1D by 3C proteinase. Its function is as follows. Plays an essential role in the virus replication cycle by acting as a viroporin. Creates a pore in the host endoplasmic reticulum and as a consequence releases Ca2+ in the cytoplasm of infected cell. In turn, high levels of cytoplasmic calcium may trigger membrane trafficking and transport of viral ER-associated proteins to viroplasms, sites of viral genome replication. In terms of biological role, associates with and induces structural rearrangements of intracellular membranes. Triggers host autophagy by interacting with host BECN1 and thereby promotes viral replication. Participates in viral replication and interacts with host DHX9. Displays RNA-binding, nucleotide binding and NTPase activities. May play a role in virion morphogenesis and viral RNA encapsidation by interacting with the capsid protein VP3. Functionally, plays important roles in virus replication, virulence and host range. Cooperates with host DDX56 to inhibit IRF3 nuclear translocation and subsequent type I interferon production. Covalently linked to the 5'-end of both the positive-strand and negative-strand genomic RNAs. Acts as a genome-linked replication primer. Its function is as follows. Cysteine protease that generates mature viral proteins from the precursor polyprotein. In addition to its proteolytic activity, binds to viral RNA and thus influences viral genome replication. RNA and substrate bind cooperatively to the protease. In terms of biological role, RNA-directed RNA polymerase 3D-POL replicates genomic and antigenomic RNA by recognizing replications specific signals. Covalently attaches UMP to a tyrosine of VPg, which is used to prime RNA synthesis. The positive stranded RNA genome is first replicated at virus induced membranous vesicles, creating a dsRNA genomic replication form. This dsRNA is then used as template to synthesize positive stranded RNA genomes. ss(+)RNA genomes are either translated, replicated or encapsidated. This Foot-and-mouth disease virus serotype Asia-1 (FMDV) protein is Genome polyprotein.